Reading from the N-terminus, the 125-residue chain is Large ribosomal subunit protein bL12 (125 aa).

Belongs to the bacterial ribosomal protein bL12 family. As to quaternary structure, homodimer. Part of the ribosomal stalk of the 50S ribosomal subunit. Forms a multimeric L10(L12)X complex, where L10 forms an elongated spine to which 2 to 4 L12 dimers bind in a sequential fashion. Binds GTP-bound translation factors.

Its function is as follows. Forms part of the ribosomal stalk which helps the ribosome interact with GTP-bound translation factors. Is thus essential for accurate translation. This Bradyrhizobium sp. (strain BTAi1 / ATCC BAA-1182) protein is Large ribosomal subunit protein bL12.